A 465-amino-acid chain; its full sequence is Pancreatic triacylglycerol lipase (465 aa).

The first 16 residues, 1 to 16, serve as a signal peptide directing secretion; it reads MLMLWTFAVLLGAVAG. Cystine bridges form between Cys20–Cys26 and Cys107–Cys118. Ser169 functions as the Nucleophile in the catalytic mechanism. Asp193 functions as the Charge relay system in the catalytic mechanism. Residues Glu204, Arg207, Asp209, and Asp212 each contribute to the Ca(2+) site. An intrachain disulfide couples Cys254 to Cys278. The active-site Charge relay system is the His280. 3 cysteine pairs are disulfide-bonded: Cys302/Cys313, Cys316/Cys321, and Cys449/Cys465. Residues 355 to 465 enclose the PLAT domain; the sequence is WRYQVTVTLS…EDVLLTLSPC (111 aa).

This sequence belongs to the AB hydrolase superfamily. Lipase family. As to quaternary structure, forms a 1:1 stoichiometric complex with (pro)colipase/CLPS. Pancreas.

It localises to the secreted. The enzyme catalyses a triacylglycerol + H2O = a diacylglycerol + a fatty acid + H(+). The catalysed reaction is 1,2,3-tri-(9Z-octadecenoyl)-glycerol + H2O = di-(9Z)-octadecenoylglycerol + (9Z)-octadecenoate + H(+). It catalyses the reaction 1,2,3-tributanoylglycerol + H2O = dibutanoylglycerol + butanoate + H(+). It carries out the reaction all-trans-retinyl hexadecanoate + H2O = all-trans-retinol + hexadecanoate + H(+). The enzyme catalyses 1,2-di-(9Z-octadecenoyl)-glycerol + H2O = (9Z-octadecenoyl)-glycerol + (9Z)-octadecenoate + H(+). Its activity is regulated as follows. Inhibited by bile salts, is reactivated by (pro)colipase/CLPS. Its function is as follows. Plays an important role in fat metabolism. It preferentially splits the esters of long-chain fatty acids at positions 1 and 3, producing mainly 2-monoacylglycerol and free fatty acids, and shows considerably higher activity against insoluble emulsified substrates than against soluble ones. This Mus musculus (Mouse) protein is Pancreatic triacylglycerol lipase.